The chain runs to 302 residues: NAD kinase 1 (302 aa).

The Proton acceptor role is filled by D67. NAD(+) is bound by residues 67-68 (DG), R72, 148-149 (ND), K178, and D180.

The protein belongs to the NAD kinase family. It depends on a divalent metal cation as a cofactor.

The protein resides in the cytoplasm. It carries out the reaction NAD(+) + ATP = ADP + NADP(+) + H(+). Functionally, involved in the regulation of the intracellular balance of NAD and NADP, and is a key enzyme in the biosynthesis of NADP. Catalyzes specifically the phosphorylation on 2'-hydroxyl of the adenosine moiety of NAD to yield NADP. The sequence is that of NAD kinase 1 from Prochlorococcus marinus (strain NATL2A).